The chain runs to 482 residues: Ribosomal RNA small subunit methyltransferase F (482 aa).

Residues 119 to 125, Glu-143, Asp-170, and Asp-188 each bind S-adenosyl-L-methionine; that span reads ASAPGSK. The active-site Nucleophile is Cys-241.

This sequence belongs to the class I-like SAM-binding methyltransferase superfamily. RsmB/NOP family.

It localises to the cytoplasm. The catalysed reaction is cytidine(1407) in 16S rRNA + S-adenosyl-L-methionine = 5-methylcytidine(1407) in 16S rRNA + S-adenosyl-L-homocysteine + H(+). Its function is as follows. Specifically methylates the cytosine at position 1407 (m5C1407) of 16S rRNA. The polypeptide is Ribosomal RNA small subunit methyltransferase F (Shewanella sp. (strain ANA-3)).